Consider the following 445-residue polypeptide: Flagellum-associated coiled-coil domain-containing protein 1 (445 aa).

The interval 26 to 47 (PQLPRKNSTGSSKLTPLVPAPK) is disordered. Polar residues predominate over residues 30 to 39 (RKNSTGSSKL). Coiled-coil stretches lie at residues 122–226 (SRTN…TYQD) and 283–315 (AVFE…TKEV). Residue Lys-376 is modified to N6-acetyllysine. A coiled-coil region spans residues 387–414 (EKYKHTIQILTEENIHLKQKIISKNEEI).

The protein localises to the cytoplasm. Its subcellular location is the cytoplasmic granule. It is found in the cell projection. The protein resides in the cilium. It localises to the flagellum. The sequence is that of Flagellum-associated coiled-coil domain-containing protein 1 from Homo sapiens (Human).